A 1357-amino-acid polypeptide reads, in one-letter code: Vascular endothelial growth factor receptor 2 (1357 aa).

The first 22 residues, 1–22, serve as a signal peptide directing secretion; it reads MAKTSYALLLLDILLTFNVAKA. Residues 23–774 lie on the Extracellular side of the membrane; that stretch reads IELRFVPDPP…GAEEKMNVEL (752 aa). 7 consecutive Ig-like C2-type domains span residues 32–120, 120–222, 216–330, 335–426, 433–553, 556–667, and 676–762; these read PTLN…SVAV, VYVF…VAVV, PYIV…ASLI, PFIA…RTFQ, PRIF…VIVF, TRFL…LLHN, and SRIV…ARIS. N-linked (GlcNAc...) asparagine glycans are attached at residues N35, N44, N66, N97, N161, N209, N247, N272, N303, N307, N407, N501, N560, N621, N631, N640, N681, N688, and N713. Cystine bridges form between C53/C104 and C153/C203. C248 and C314 are oxidised to a cystine. Residues C457 and C538 are joined by a disulfide bond. The cysteines at positions 579 and 651 are disulfide-linked. The cysteines at positions 697 and 746 are disulfide-linked. Residues 775–795 traverse the membrane as a helical segment; sequence IMPIGAVVIAMFLWLLIVFVI. Residues 796 to 1357 are Cytoplasmic-facing; the sequence is RNRKRPNDGD…AEVRYSAPPV (562 aa). Positions 843–1173 constitute a Protein kinase domain; sequence LKLGEPLGRG…FTQLVEHLGN (331 aa). Residues 849–857 and K877 contribute to the ATP site; that span reads LGRGAFGQV. Residues 944-975 form a disordered region; sequence YSPYKKRTPRMPNRREVQQDEDPREGDLGLGT. The active-site Proton acceptor is D1039. 4 positions are modified to phosphotyrosine; by autocatalysis: Y1065, Y1070, Y1186, and Y1222. The interval 1296–1357 is disordered; that stretch reads SLASESSNQT…AEVRYSAPPV (62 aa). Polar residues predominate over residues 1298-1312; it reads ASESSNQTSGYQSGY.

Belongs to the protein kinase superfamily. Tyr protein kinase family. CSF-1/PDGF receptor subfamily. In terms of assembly, interacts with isoform VEGF165 of vegfaa and, to a lesser extent, with isoform VEGF171 of vegfab. Interacts (via juxtamembrane region) with chaperone pdcl3 (via thioredoxin fold region); the interaction leads to increased vegfr2 abundance through inhibition of its ubiquitination and degradation. First expressed in embryos between 5- and 7-somites in the bilateral stripes that contain the developing angioblasts, and then localized to the intermediate cell mass (ICM) and the developing vasculature. By 30 hpf, expressed in the major trunk, head and intersomitic vessels, persisting through 4 dpf when expression is seen in developing subintestinal veins and in the remaining vasculature.

It localises to the cell membrane. Its subcellular location is the cytoplasm. The protein localises to the nucleus. The protein resides in the cytoplasmic vesicle. It is found in the early endosome. It localises to the cell junction. Its subcellular location is the endoplasmic reticulum. The enzyme catalyses L-tyrosyl-[protein] + ATP = O-phospho-L-tyrosyl-[protein] + ADP + H(+). In terms of biological role, receptor for VEGF or VEGFC. Has a tyrosine-protein kinase activity. Combinations of multiple VEGF receptors are required for development of different blood vessel types in the embryo. Involved in angiogenesis, specifically in VEGF-induced sprouting of new blood vessels. Particularly involved in artery formation. Does not appear to be required for hematopoiesis. In Danio rerio (Zebrafish), this protein is Vascular endothelial growth factor receptor 2.